Reading from the N-terminus, the 98-residue chain is Co-chaperonin GroES 5 (98 aa).

Belongs to the GroES chaperonin family. As to quaternary structure, heptamer of 7 subunits arranged in a ring. Interacts with the chaperonin GroEL.

It is found in the cytoplasm. Together with the chaperonin GroEL, plays an essential role in assisting protein folding. The GroEL-GroES system forms a nano-cage that allows encapsulation of the non-native substrate proteins and provides a physical environment optimized to promote and accelerate protein folding. GroES binds to the apical surface of the GroEL ring, thereby capping the opening of the GroEL channel. The chain is Co-chaperonin GroES 5 from Mesorhizobium japonicum (strain LMG 29417 / CECT 9101 / MAFF 303099) (Mesorhizobium loti (strain MAFF 303099)).